We begin with the raw amino-acid sequence, 277 residues long: MSENDEGTDAAELDEELDELEDELEEDFEEPAAAADEADPTADEPPAEEAADEAADEAEADEPETDAEPADEEPVLDENVMPDDEADLLIPVEDYLAAGVHIGTQQKTKSMDRFIHRVRTDGLYVLDVSQTDQRIRTAASFLSNYQPEQILVASSRQYGRFPAEKFADAVGARARTGRFIPGTLTNPDYDGYIEPDVVVVTDPIGDSQAVKEAITVGIPVIAMCDSNNTTSNVDLVVPTNNKGRKALSVIYWLLANETLDRRGAEPAYALEDFETEP.

The disordered stretch occupies residues Met-1–Glu-78.

This sequence belongs to the universal ribosomal protein uS2 family.

This Natronomonas pharaonis (strain ATCC 35678 / DSM 2160 / CIP 103997 / JCM 8858 / NBRC 14720 / NCIMB 2260 / Gabara) (Halobacterium pharaonis) protein is Small ribosomal subunit protein uS2.